Consider the following 258-residue polypeptide: NAD kinase (258 aa).

Catalysis depends on Asp51, which acts as the Proton acceptor. NAD(+) is bound by residues 51–52, Lys56, 119–120, Lys130, Asp149, 160–165, and Ala184; these read DG, ND, and TAYSLS.

The protein belongs to the NAD kinase family. The cofactor is a divalent metal cation.

It is found in the cytoplasm. The catalysed reaction is NAD(+) + ATP = ADP + NADP(+) + H(+). Involved in the regulation of the intracellular balance of NAD and NADP, and is a key enzyme in the biosynthesis of NADP. Catalyzes specifically the phosphorylation on 2'-hydroxyl of the adenosine moiety of NAD to yield NADP. The sequence is that of NAD kinase from Thermotoga sp. (strain RQ2).